Reading from the N-terminus, the 3198-residue chain is Helicase domino (3198 aa).

A compositionally biased stretch (gly residues) spans 1-12; the sequence is MNEGNSAGGGHE. Disordered regions lie at residues 1 to 27, 93 to 112, and 119 to 148; these read MNEGNSAGGGHEGLSPAPPAVPDRVTP, LPQQQQQTAEATAAAAAPAH, and SSTIEASVLPPQAKRQRLDDNEDRTSAASI. Basic and acidic residues predominate over residues 134 to 143; that stretch reads QRLDDNEDRT. Positions 187-212 form a coiled coil; the sequence is KKRILQQKLQILRNLKERHLENVSEY. Disordered stretches follow at residues 256–350 and 391–474; these read TSAA…SATS and GGTP…TPNS. 2 stretches are compositionally biased toward polar residues: residues 264-281 and 297-329; these read QNQKYTTQQTDSVESSLV and NISNSTVKTNTQSQVPSKIGSFTESTPAATESN. Over residues 330–350 the composition is skewed to low complexity; sequence SSTTVPGTATSGAATSTSATS. The span at 391–404 shows a compositional bias: polar residues; it reads GGTPLLPCNTSAGS. Residues 452–464 are compositionally biased toward low complexity; that stretch reads PGTPTSGSLLSPA. Residues 507-579 enclose the HSA domain; it reads LPKLQEPSRP…QELQLKRVAS (73 aa). The tract at residues 635–848 is disordered; it reads NKSVADTPSL…DMEEQDEQED (214 aa). Positions 638 to 650 are enriched in polar residues; the sequence is VADTPSLNSSRLT. Over residues 652–664 the composition is skewed to basic and acidic residues; sequence PKRESDDDFRPES. 3 positions are modified to phosphoserine: Ser656, Ser664, and Ser666. A coiled-coil region spans residues 666–696; that stretch reads SEDDEETIAKAEEDAADVKEEVTALAKESEM. Basic and acidic residues-rich tracts occupy residues 672-695 and 711-721; these read TIAKAEEDAADVKEEVTALAKESE and ENRDKLMKEEQ. Thr729 bears the Phosphothreonine mark. Phosphoserine occurs at positions 733, 736, and 744. Positions 741–784 form a coiled coil; sequence KEASDDDENTISKQEEAEQEIDHKKEIDELEADNDLSVEQLLAK. The segment covering 753-767 has biased composition (basic and acidic residues); the sequence is KQEEAEQEIDHKKEI. A compositionally biased stretch (acidic residues) spans 805-831; sequence LDSDDDSTAVDSTEESEDAATEDEEDL. Thr838 carries the phosphothreonine modification. A Helicase ATP-binding domain is found at 926 to 1091; the sequence is VTMNERKLNG…WSLMHFLMPY (166 aa). Position 939–946 (939–946) interacts with ATP; it reads DEMGLGKT. A disordered region spans residues 1471-1492; that stretch reads VQKQSIANGKTEPEEETEAEDP. A Helicase C-terminal domain is found at 1662-1812; sequence TMDRLLRQLK…DMAIEGGNFT (151 aa). The disordered stretch occupies residues 1828–1856; it reads EQSEQDESSQEKSENKDRIVATTTLSDTP. The span at 1836–1846 shows a compositional bias: basic and acidic residues; that stretch reads SQEKSENKDRI. The stretch at 1951–1996 forms a coiled coil; that stretch reads AAWTAEQLRAAEAELEAQKREWEANRLAAMHKEEELLKQETEAEEM. The disordered stretch occupies residues 2061 to 2100; sequence KEHKRSRTDAGYDGSRRPNKMRREDNYVPPRSLFDRPTPQ. Residues 2067–2086 are compositionally biased toward basic and acidic residues; the sequence is RTDAGYDGSRRPNKMRREDN. In terms of domain architecture, Myb-like spans 2136 to 2205; sequence TEPEAMAEWC…QCRWRYETHI (70 aa). The disordered stretch occupies residues 2318-2362; it reads IREKQRGQQMSQPPVGVGVVQQMQQQSQQQQQPAPPPLPQQQQPQ. The segment covering 2325-2349 has biased composition (low complexity); sequence QQMSQPPVGVGVVQQMQQQSQQQQQ.

This sequence belongs to the SNF2/RAD54 helicase family. SWR1 subfamily. Component of the Tip60 chromatin-remodeling complex which contains Domino, Tip60, Tra1, Brd8, E(Pc), DMAP1, Pontin, Reptin, Ing3, Act87E, BAP55, Mrg15, MrgBP, Gas41 and YL-1. As to expression, isoform B is present at high levels in ovary, in follicle cells, nurse cells and oocyte. Isoform B is also present in germline and somatic stem cells from the germarium. Isoform A is undetectable in adult ovary (at protein level).

The protein resides in the nucleus. In terms of biological role, mediates the ATP-dependent exchange of unmodified histone H2AV for its phosphorylated and acetylated form H2AVK5acS138ph, leading to transcriptional regulation of selected genes by chromatin remodeling. Involved in Notch signaling. Represses E2F target genes. Required for somatic stem cell self-renewal but not for germline stem cell self-renewal. Involved in oogenesis. The protein is Helicase domino (dom) of Drosophila melanogaster (Fruit fly).